Reading from the N-terminus, the 351-residue chain is Phosphoribosylformylglycinamidine cyclo-ligase (351 aa).

Belongs to the AIR synthase family.

Its subcellular location is the cytoplasm. It catalyses the reaction 2-formamido-N(1)-(5-O-phospho-beta-D-ribosyl)acetamidine + ATP = 5-amino-1-(5-phospho-beta-D-ribosyl)imidazole + ADP + phosphate + H(+). It functions in the pathway purine metabolism; IMP biosynthesis via de novo pathway; 5-amino-1-(5-phospho-D-ribosyl)imidazole from N(2)-formyl-N(1)-(5-phospho-D-ribosyl)glycinamide: step 2/2. The sequence is that of Phosphoribosylformylglycinamidine cyclo-ligase from Oleidesulfovibrio alaskensis (strain ATCC BAA-1058 / DSM 17464 / G20) (Desulfovibrio alaskensis).